The chain runs to 150 residues: Avidin-related protein 4/5 (150 aa).

Residues 1–24 (MVHTTSPLLLLLLLSLALVAPSLS) form the signal peptide. The region spanning 26–147 (RKCSLTGKWT…GYNNFTRLCT (122 aa)) is the Avidin-like domain. A disulfide bridge connects residues cysteine 28 and cysteine 105. Biotin is bound by residues asparagine 36, serine 40, tyrosine 57, threonine 59, and aspartate 63. Residues asparagine 67 and asparagine 93 are each glycosylated (N-linked (GlcNAc...) asparagine). The biotin site is built by serine 95 and asparagine 140. Residue asparagine 141 is glycosylated (N-linked (GlcNAc...) asparagine).

It belongs to the avidin/streptavidin family. As to quaternary structure, homotetramer.

The protein localises to the secreted. Functionally, forms a strong non-covalent specific complex with biotin. This Gallus gallus (Chicken) protein is Avidin-related protein 4/5 (AVR4).